The chain runs to 197 residues: Dephospho-CoA kinase (197 aa).

The region spanning 3-197 is the DPCK domain; the sequence is VYGLTGGIGS…QSLLHTHQNT (195 aa). 11–16 serves as a coordination point for ATP; sequence GSGKTT.

Belongs to the CoaE family.

The protein localises to the cytoplasm. It catalyses the reaction 3'-dephospho-CoA + ATP = ADP + CoA + H(+). It functions in the pathway cofactor biosynthesis; coenzyme A biosynthesis; CoA from (R)-pantothenate: step 5/5. Functionally, catalyzes the phosphorylation of the 3'-hydroxyl group of dephosphocoenzyme A to form coenzyme A. The chain is Dephospho-CoA kinase from Hydrogenovibrio crunogenus (strain DSM 25203 / XCL-2) (Thiomicrospira crunogena).